The primary structure comprises 200 residues: dITP/XTP pyrophosphatase (200 aa).

Residue 7–12 participates in substrate binding; sequence TSNKHK. Positions 38 and 73 each coordinate Mg(2+). Aspartate 73 functions as the Proton acceptor in the catalytic mechanism. Substrate is bound by residues serine 74, 154 to 157, lysine 177, and 182 to 183; these read FGYD and HR.

Belongs to the HAM1 NTPase family. As to quaternary structure, homodimer. Mg(2+) serves as cofactor.

The enzyme catalyses XTP + H2O = XMP + diphosphate + H(+). The catalysed reaction is dITP + H2O = dIMP + diphosphate + H(+). It catalyses the reaction ITP + H2O = IMP + diphosphate + H(+). In terms of biological role, pyrophosphatase that catalyzes the hydrolysis of nucleoside triphosphates to their monophosphate derivatives, with a high preference for the non-canonical purine nucleotides XTP (xanthosine triphosphate), dITP (deoxyinosine triphosphate) and ITP. Seems to function as a house-cleaning enzyme that removes non-canonical purine nucleotides from the nucleotide pool, thus preventing their incorporation into DNA/RNA and avoiding chromosomal lesions. The chain is dITP/XTP pyrophosphatase from Campylobacter jejuni subsp. jejuni serotype O:6 (strain 81116 / NCTC 11828).